The primary structure comprises 159 residues: 6,7-dimethyl-8-ribityllumazine synthase (159 aa).

5-amino-6-(D-ribitylamino)uracil-binding positions include F22, 57–59, and 81–83; these read AVE and AVI. 86 to 87 provides a ligand contact to (2S)-2-hydroxy-3-oxobutyl phosphate; sequence GT. The active-site Proton donor is H89. Position 114 (F114) interacts with 5-amino-6-(D-ribitylamino)uracil. R128 is a binding site for (2S)-2-hydroxy-3-oxobutyl phosphate.

It belongs to the DMRL synthase family. In terms of assembly, forms an icosahedral capsid composed of 60 subunits, arranged as a dodecamer of pentamers.

The catalysed reaction is (2S)-2-hydroxy-3-oxobutyl phosphate + 5-amino-6-(D-ribitylamino)uracil = 6,7-dimethyl-8-(1-D-ribityl)lumazine + phosphate + 2 H2O + H(+). The protein operates within cofactor biosynthesis; riboflavin biosynthesis; riboflavin from 2-hydroxy-3-oxobutyl phosphate and 5-amino-6-(D-ribitylamino)uracil: step 1/2. Catalyzes the formation of 6,7-dimethyl-8-ribityllumazine by condensation of 5-amino-6-(D-ribitylamino)uracil with 3,4-dihydroxy-2-butanone 4-phosphate. This is the penultimate step in the biosynthesis of riboflavin. This is 6,7-dimethyl-8-ribityllumazine synthase from Shewanella denitrificans (strain OS217 / ATCC BAA-1090 / DSM 15013).